The chain runs to 296 residues: Bifunctional protein FolD (296 aa).

NADP(+)-binding positions include Gly-169–Gly-171, Thr-196, and Val-237.

It belongs to the tetrahydrofolate dehydrogenase/cyclohydrolase family. As to quaternary structure, homodimer.

The enzyme catalyses (6R)-5,10-methylene-5,6,7,8-tetrahydrofolate + NADP(+) = (6R)-5,10-methenyltetrahydrofolate + NADPH. It catalyses the reaction (6R)-5,10-methenyltetrahydrofolate + H2O = (6R)-10-formyltetrahydrofolate + H(+). It participates in one-carbon metabolism; tetrahydrofolate interconversion. In terms of biological role, catalyzes the oxidation of 5,10-methylenetetrahydrofolate to 5,10-methenyltetrahydrofolate and then the hydrolysis of 5,10-methenyltetrahydrofolate to 10-formyltetrahydrofolate. The polypeptide is Bifunctional protein FolD (Kocuria rhizophila (strain ATCC 9341 / DSM 348 / NBRC 103217 / DC2201)).